Here is a 336-residue protein sequence, read N- to C-terminus: Holliday junction branch migration complex subunit RuvB (336 aa).

Positions 4 to 184 (ADRLISAGTT…FGIVQRLEFY (181 aa)) are large ATPase domain (RuvB-L). ATP is bound by residues I23, R24, G65, K68, T69, T70, 131-133 (EDY), R174, Y184, and R221. Residue T69 coordinates Mg(2+). Positions 185 to 255 (QVPDLQYIVS…IAAQALDMLN (71 aa)) are small ATPAse domain (RuvB-S). A head domain (RuvB-H) region spans residues 258-336 (AEGFDYMDRK…HFGITPPEMP (79 aa)). DNA contacts are provided by R294, R313, and R318.

It belongs to the RuvB family. In terms of assembly, homohexamer. Forms an RuvA(8)-RuvB(12)-Holliday junction (HJ) complex. HJ DNA is sandwiched between 2 RuvA tetramers; dsDNA enters through RuvA and exits via RuvB. An RuvB hexamer assembles on each DNA strand where it exits the tetramer. Each RuvB hexamer is contacted by two RuvA subunits (via domain III) on 2 adjacent RuvB subunits; this complex drives branch migration. In the full resolvosome a probable DNA-RuvA(4)-RuvB(12)-RuvC(2) complex forms which resolves the HJ.

The protein localises to the cytoplasm. It carries out the reaction ATP + H2O = ADP + phosphate + H(+). In terms of biological role, the RuvA-RuvB-RuvC complex processes Holliday junction (HJ) DNA during genetic recombination and DNA repair, while the RuvA-RuvB complex plays an important role in the rescue of blocked DNA replication forks via replication fork reversal (RFR). RuvA specifically binds to HJ cruciform DNA, conferring on it an open structure. The RuvB hexamer acts as an ATP-dependent pump, pulling dsDNA into and through the RuvAB complex. RuvB forms 2 homohexamers on either side of HJ DNA bound by 1 or 2 RuvA tetramers; 4 subunits per hexamer contact DNA at a time. Coordinated motions by a converter formed by DNA-disengaged RuvB subunits stimulates ATP hydrolysis and nucleotide exchange. Immobilization of the converter enables RuvB to convert the ATP-contained energy into a lever motion, pulling 2 nucleotides of DNA out of the RuvA tetramer per ATP hydrolyzed, thus driving DNA branch migration. The RuvB motors rotate together with the DNA substrate, which together with the progressing nucleotide cycle form the mechanistic basis for DNA recombination by continuous HJ branch migration. Branch migration allows RuvC to scan DNA until it finds its consensus sequence, where it cleaves and resolves cruciform DNA. In Shigella flexneri serotype 5b (strain 8401), this protein is Holliday junction branch migration complex subunit RuvB.